A 728-amino-acid polypeptide reads, in one-letter code: Glutamate--cysteine ligase (728 aa).

Positions 517-552 (PVRTTRRGGSASRSASGTSTPNSGSSRPATPPLGPV) are disordered. A compositionally biased stretch (low complexity) spans 523-536 (RGGSASRSASGTST).

This sequence belongs to the glutamate--cysteine ligase type 3 family.

The enzyme catalyses L-cysteine + L-glutamate + ATP = gamma-L-glutamyl-L-cysteine + ADP + phosphate + H(+). The protein operates within sulfur metabolism; glutathione biosynthesis; glutathione from L-cysteine and L-glutamate: step 1/2. The chain is Glutamate--cysteine ligase (gcs-1) from Neurospora crassa (strain ATCC 24698 / 74-OR23-1A / CBS 708.71 / DSM 1257 / FGSC 987).